The primary structure comprises 130 residues: Small ribosomal subunit protein uS9 (130 aa).

Belongs to the universal ribosomal protein uS9 family.

This Bordetella bronchiseptica (strain ATCC BAA-588 / NCTC 13252 / RB50) (Alcaligenes bronchisepticus) protein is Small ribosomal subunit protein uS9.